The chain runs to 188 residues: FMN reductase (NADH) RutF (188 aa).

It belongs to the non-flavoprotein flavin reductase family. RutF subfamily.

It catalyses the reaction FMNH2 + NAD(+) = FMN + NADH + 2 H(+). Functionally, catalyzes the reduction of FMN to FMNH2 which is used to reduce pyrimidine by RutA via the Rut pathway. The polypeptide is FMN reductase (NADH) RutF (Acinetobacter baylyi (strain ATCC 33305 / BD413 / ADP1)).